The primary structure comprises 159 residues: MQFDDIITKILKVGIISILFIINMAKNAVNSHFGIRTPRSVCHVRNRENIYLYWTTFDAHKLPNGGNADMAHFSANCLHAGHTVKFVSADRLGSTTWECNIKFGILSFPNFGKDDAAQNCFAEPSMKSISADTQHISAREYISGTSKGFKTATPKLLNI.

This is an uncharacterized protein from Schizosaccharomyces pombe (strain 972 / ATCC 24843) (Fission yeast).